The chain runs to 455 residues: tRNA modification GTPase MnmE (455 aa).

Residues Arg24, Glu81, and Lys121 each contribute to the (6S)-5-formyl-5,6,7,8-tetrahydrofolate site. Positions 217–378 constitute a TrmE-type G domain; sequence GMKVVIAGRP…LKEHLKDIMG (162 aa). Residue Asn227 participates in K(+) binding. GTP-binding positions include 227–232, 246–252, 271–274, and 336–339; these read NAGKSS, TDIAGTT, DTAG, and NKAD. Ser231 contacts Mg(2+). K(+) is bound by residues Thr246, Ile248, and Thr251. Thr252 provides a ligand contact to Mg(2+). Lys455 is a binding site for (6S)-5-formyl-5,6,7,8-tetrahydrofolate.

The protein belongs to the TRAFAC class TrmE-Era-EngA-EngB-Septin-like GTPase superfamily. TrmE GTPase family. As to quaternary structure, homodimer. Heterotetramer of two MnmE and two MnmG subunits. K(+) serves as cofactor.

It localises to the cytoplasm. In terms of biological role, exhibits a very high intrinsic GTPase hydrolysis rate. Involved in the addition of a carboxymethylaminomethyl (cmnm) group at the wobble position (U34) of certain tRNAs, forming tRNA-cmnm(5)s(2)U34. This chain is tRNA modification GTPase MnmE, found in Psychromonas ingrahamii (strain DSM 17664 / CCUG 51855 / 37).